A 428-amino-acid chain; its full sequence is MSKTHLTEQKFSDFALHPLVVEALENKGFQYCTPIQALALPLTLSGRDVAGQAQTGTGKTLAFLASTFHYLLSHPAEEGRQTNQPRALIMAPTRELAVQIHSDAESLSQVTGLKLGLAYGGDGYDKQLKVLESGVDILIGTTGRLIDYAKQNYINLGAIQVVVLDEADRMYDLGFIKDIRWLFRRMPSVDKRLNMLFSATLSYRVRELAFEQMNNAEYVEVEPLQKTGHRIKEELFYPSNEEKMRLLQTLIEEEWPDRCIIFANTKHRCEEIWGHLAADGHRVGLLTGDVAQKKRLRILEDFTKGDLDILVATDVAARGLHIPLVTHVFNYDLPDDCEDYVHRIGRTGRAGESGHSISLACEEYALNLPAIETYTGHSIPVSKYNSDALLTDLPAPKRLARTRTGNGPRRNSAPRRSGAPRNNRKRPG.

The Q motif signature appears at 9–37 (QKFSDFALHPLVVEALENKGFQYCTPIQA). A Helicase ATP-binding domain is found at 40–219 (LPLTLSGRDV…FEQMNNAEYV (180 aa)). 53-60 (AQTGTGKT) lines the ATP pocket. The short motif at 165 to 168 (DEAD) is the DEAD box element. The Helicase C-terminal domain occupies 245 to 390 (RLLQTLIEEE…VSKYNSDALL (146 aa)). Residues 394-428 (PAPKRLARTRTGNGPRRNSAPRRSGAPRNNRKRPG) form a disordered region.

It belongs to the DEAD box helicase family. RhlB subfamily. Component of the RNA degradosome, which is a multiprotein complex involved in RNA processing and mRNA degradation.

The protein resides in the cytoplasm. It carries out the reaction ATP + H2O = ADP + phosphate + H(+). Its function is as follows. DEAD-box RNA helicase involved in RNA degradation. Has RNA-dependent ATPase activity and unwinds double-stranded RNA. This Yersinia pseudotuberculosis serotype O:1b (strain IP 31758) protein is ATP-dependent RNA helicase RhlB.